The sequence spans 519 residues: Lysine histidine transporter-like 8 (519 aa).

Positions 1-44 are disordered; it reads MDERPETELISIPATPRVSTPEILTPSGQRSPRPATKPSSATWT. At 1 to 114 the chain is on the cytoplasmic side; sequence MDERPETELI…NLNAGVGFQA (114 aa). Transmembrane regions (helical) follow at residues 115 to 135 and 136 to 156; these read LVLP…SLTI and AYCW…AVPG. Over 157 to 176 the chain is Cytoplasmic; that stretch reads KRYNRYVELAQAAFGERLGV. A helical membrane pass occupies residues 177–197; sequence WLALFPTVYLSAGTATALILI. Residues 198 to 217 lie on the Extracellular side of the membrane; it reads GGETMKLFFQIVCGPLCTSN. A helical transmembrane segment spans residues 218-238; that stretch reads PLTTVEWYLVFTSLCIVLSQL. At 239-243 the chain is on the cytoplasmic side; sequence PNLNS. Residues 244-264 traverse the membrane as a helical segment; that stretch reads IAGLSLIGAVTAITYSTMVWV. Over 265-282 the chain is Extracellular; sequence LSVSQPRPATISYEPLSM. A helical membrane pass occupies residues 283 to 303; it reads PSTSGSLFAVLNALGIIAFAF. Over 304–333 the chain is Cytoplasmic; the sequence is RGHNLVLEIQSTMPSTFKHPAHVPMWRGAK. Residues 334–354 traverse the membrane as a helical segment; sequence ISYFLIALCIFPISIGGFWAY. The Extracellular portion of the chain corresponds to 355–377; that stretch reads GNLMPSGGMLAALYAFHIHDIPR. A helical transmembrane segment spans residues 378–398; it reads GLLATAFLLVVFSCLSSFQIY. The Cytoplasmic portion of the chain corresponds to 399–427; it reads SMPAFDSFEAGYTSRTNKPCSIWVRSGFR. Residues 428 to 448 form a helical membrane-spanning segment; it reads VFFGFVSFFIGVALPFLSSLA. G449 is a topological domain (extracellular). A helical transmembrane segment spans residues 450–470; that stretch reads LLGGLTLPVTFAYPCFMWVLI. Topologically, residues 471–485 are cytoplasmic; the sequence is KKPAKYSFNWYFHWG. A helical membrane pass occupies residues 486 to 506; the sequence is LGWLGVAFSLAFSIGGIWSMV. The Extracellular portion of the chain corresponds to 507–519; it reads TNGLKLKFFKPPN.

This sequence belongs to the amino acid/polyamine transporter 2 family. Amino acid/auxin permease (AAAP) (TC 2.A.18.2) subfamily.

The protein resides in the cell membrane. Functionally, amino acid transporter. The sequence is that of Lysine histidine transporter-like 8 (AATL1) from Arabidopsis thaliana (Mouse-ear cress).